A 248-amino-acid polypeptide reads, in one-letter code: Mannosylfructose-phosphate phosphatase (248 aa).

The protein belongs to the sucrose phosphatase family.

It catalyses the reaction beta-D-fructofuranosyl alpha-D-mannopyranoside 6(F)-phosphate + H2O = beta-D-fructofuranosyl alpha-D-mannopyranoside + phosphate. Its pathway is carbohydrate metabolism; mannosylfructose biosynthesis; beta-D-fructofuranosyl alpha-D-mannopyranoside from D-fructose 6-phosphate and GDP-alpha-D-mannose: step 2/2. Inhibited by the phosphatase inhibitors fluoride, molybdate and orthovanadate. In Agrobacterium fabrum (strain C58 / ATCC 33970) (Agrobacterium tumefaciens (strain C58)), this protein is Mannosylfructose-phosphate phosphatase.